A 359-amino-acid polypeptide reads, in one-letter code: N-acetylneuraminate-9-phosphate synthase (359 aa).

3 positions are modified to N6-acetyllysine: Lys61, Lys74, and Lys79. Ser275 is subject to Phosphoserine. The residue at position 290 (Lys290) is an N6-acetyllysine. One can recognise an AFP-like domain in the interval 294 to 353 (SVVAKVKIPEGTILTMDMLTVKVGEPKGYPPEDIFNLVGKKVLVTVEEDDTIMEELVDNH).

Ubiquitous.

It carries out the reaction aldehydo-N-acetyl-D-mannosamine 6-phosphate + phosphoenolpyruvate + H2O = N-acetylneuraminate 9-phosphate + phosphate. It catalyses the reaction aldehydo-D-mannose 6-phosphate + phosphoenolpyruvate + H2O = 3-deoxy-D-glycero-beta-D-galacto-non-2-ulopyranosonate 9-phosphate + phosphate. In terms of biological role, catalyzes the condensation of phosphoenolpyruvate (PEP) and N-acetylmannosamine 6-phosphate (ManNAc-6-P) to synthesize N-acetylneuraminate-9-phosphate (Neu5Ac-9-P). Also catalyzes the condensation of PEP and D-mannose 6-phosphate (Man-6-P) to produce 3-deoxy-D-glycero-beta-D-galacto-non-2-ulopyranosonate 9-phosphate (KDN-9-P). Neu5Ac-9-P and KDN-9-P are the phosphorylated forms of sialic acids N-acetylneuraminic acid (Neu5Ac) and deaminoneuraminic acid (KDN), respectively. Required for brain and skeletal development. This is N-acetylneuraminate-9-phosphate synthase from Homo sapiens (Human).